A 114-amino-acid polypeptide reads, in one-letter code: rRNA-processing protein cgrA (114 aa).

Residues 1-11 are compositionally biased toward polar residues; the sequence is MSSAIPTSSVN. The tract at residues 1–114 is disordered; that stretch reads MSSAIPTSSV…REKRNKLLHS (114 aa). The span at 39–93 shows a compositional bias: basic and acidic residues; the sequence is YEKRLEARKRQEAVKEHERELREEKEAERKAQIQKIKDRRAAKEEKERYEKMAEK. Residues 40–101 are a coiled coil; the sequence is EKRLEARKRQ…EKMHRKRVER (62 aa). The span at 94–114 shows a compositional bias: basic residues; it reads MHRKRVERLKRREKRNKLLHS.

This sequence belongs to the CGR1 family.

The protein resides in the nucleus. It is found in the nucleolus. Involved in nucleolar integrity and required for processing of the pre-rRNA for the 60S ribosome subunit. The polypeptide is rRNA-processing protein cgrA (cgrA) (Aspergillus fumigatus (strain ATCC MYA-4609 / CBS 101355 / FGSC A1100 / Af293) (Neosartorya fumigata)).